Consider the following 322-residue polypeptide: MFKIGYRTIKTALGTALAIYISQLLHLQNFASAGIITILCIQITQKRSLQASWARFSACCLAIAFSYLFFELIGYHPFVIGALLLIFIPITVLLKINEGIVTSSVIILHLYMSGGITPTFIWNEVQLITVGIGVALLMNLYMPSLDRKLIAYRKKIEDNFAVIFAEIERYLLTGEQDWSGKEIPETHQLITEAKNLAYRDVQNHILRYENLHYHYFKMREKQFEIIERLLPKVTSISITVDQGKMIAEFIHDLREAIHPGNTAYKFLKRLADMRKEFEEMPLPATREEFEARAALFHLLGEMEQYLVIKSYFKGIKAQKSLG.

4 consecutive transmembrane segments (helical) span residues 24-44 (LLHL…IQIT), 68-88 (LFFE…LIFI), 100-120 (IVTS…TPTF), and 125-145 (VQLI…MPSL).

It is found in the cell membrane. This is an uncharacterized protein from Bacillus subtilis (strain 168).